Here is a 742-residue protein sequence, read N- to C-terminus: Potassium transporter 19 (742 aa).

Residues 1–46 (MSVQEDGAARPEPDVLRRHDSLYGDAEKVSNNKRHGAGGSWARTLQ) lie on the Cytoplasmic side of the membrane. The helical transmembrane segment at 47–67 (LAFQSIGVVYGDVGTSPLYVY) threads the bilayer. The Extracellular portion of the chain corresponds to 68–83 (SSTFPNGIKHPDDLVG). A helical membrane pass occupies residues 84-104 (VLSLILYTLILIPMVKYVFIV). Residues 105–170 (LYANDNGDGG…QKLESSNAAK (66 aa)) are Cytoplasmic-facing. Residues 171 to 191 (IALFTITILGTSMVMGDGTLT) traverse the membrane as a helical segment. Topologically, residues 192–206 (PAISVLSAVSGIREK) are extracellular. The helical transmembrane segment at 207-227 (APNLTQSQVVWISVAILFVLF) threads the bilayer. The Cytoplasmic segment spans residues 228–236 (SMQRFGTDK). The helical transmembrane segment at 237–257 (VGYTFAPVISVWFLLIAGIGM) threads the bilayer. The Extracellular portion of the chain corresponds to 258 to 287 (YNLTVHEITILRAFNPKYIVDYFRRNGKEA). Asn259 carries an N-linked (GlcNAc...) asparagine glycan. A helical transmembrane segment spans residues 288-308 (WVSLGGVVLCITGTEAMFADL). The Cytoplasmic segment spans residues 309–317 (GHFNIRAIQ). A helical transmembrane segment spans residues 318–338 (LSFTCVLFPSVALCYMGQAAY). Topologically, residues 339–352 (LRKFPENVGDTFYR) are extracellular. The helical transmembrane segment at 353–373 (SIPAPLFWPVFVVAIMGAIIA) threads the bilayer. Over 374 to 409 (SQAMLSGAFAILSKALSLGCFPRVEVVHTSNKYEGQ) the chain is Cytoplasmic. A helical membrane pass occupies residues 410-430 (VYIPEVNFLIGAASVAVTLAF). Residues 431–441 (QTTANIGNAYG) are Extracellular-facing. A helical transmembrane segment spans residues 442 to 462 (ICVVTVFSITTHLMTVVMLLI). The Cytoplasmic portion of the chain corresponds to 463–468 (WKVRLP). A helical transmembrane segment spans residues 469 to 489 (FIAAFYAAFGLAEFLYLSSIL). Residues 490–495 (SKFAEG) lie on the Extracellular side of the membrane. Residues 496–516 (GYLPFCFSLVLMALMATWHYV) traverse the membrane as a helical segment. At 517 to 742 (HVKRYWYELD…LLKVGITYEI (226 aa)) the chain is on the cytoplasmic side.

This sequence belongs to the HAK/KUP transporter (TC 2.A.72.3) family.

It localises to the membrane. Its function is as follows. High-affinity potassium transporter. The polypeptide is Potassium transporter 19 (HAK19) (Oryza sativa subsp. japonica (Rice)).